A 502-amino-acid polypeptide reads, in one-letter code: Glycerol kinase (502 aa).

Position 14 (Thr-14) interacts with ADP. Residues Thr-14, Thr-15, and Ser-16 each contribute to the ATP site. Thr-14 is a binding site for sn-glycerol 3-phosphate. Arg-18 provides a ligand contact to ADP. The sn-glycerol 3-phosphate site is built by Arg-84, Glu-85, Tyr-136, and Asp-246. 5 residues coordinate glycerol: Arg-84, Glu-85, Tyr-136, Asp-246, and Gln-247. 2 residues coordinate ADP: Thr-268 and Gly-311. 4 residues coordinate ATP: Thr-268, Gly-311, Gln-315, and Gly-412. The ADP site is built by Gly-412 and Asn-416.

The protein belongs to the FGGY kinase family. Homotetramer and homodimer (in equilibrium). Heterodimer with EIIA-Glc. Binds 1 zinc ion per glycerol kinase EIIA-Glc dimer. The zinc ion is important for dimerization.

It carries out the reaction glycerol + ATP = sn-glycerol 3-phosphate + ADP + H(+). It participates in polyol metabolism; glycerol degradation via glycerol kinase pathway; sn-glycerol 3-phosphate from glycerol: step 1/1. Activity of this regulatory enzyme is affected by several metabolites. Allosterically and non-competitively inhibited by fructose 1,6-bisphosphate (FBP) and unphosphorylated phosphocarrier protein EIIA-Glc (III-Glc), an integral component of the bacterial phosphotransferase (PTS) system. Key enzyme in the regulation of glycerol uptake and metabolism. Catalyzes the phosphorylation of glycerol to yield sn-glycerol 3-phosphate. This Citrobacter koseri (strain ATCC BAA-895 / CDC 4225-83 / SGSC4696) protein is Glycerol kinase.